The following is a 609-amino-acid chain: Myoneurin (609 aa).

A BTB domain is found at 24–89 (CDCTILIGDF…IYSGNLNYDS (66 aa)). 2 short sequence motifs (nuclear localization signal) span residues 172-188 (KKSQ…RSHQ) and 257-262 (QKPAKL). 8 consecutive C2H2-type zinc fingers follow at residues 301 to 323 (PVCN…MRIH), 329 to 351 (YVCH…VRTH), 357 to 380 (YQCK…RMHH), 386 to 408 (YKCD…ARKH), 414 to 436 (YVCD…VRRH), 442 to 464 (YVCD…ARKH), 470 to 492 (YICG…FRSH), and 498 to 521 (FVCE…LKMH). The segment at 528–553 (IEMKSAENSSSSEDSTTKSPEPESLE) is disordered. Positions 533–546 (AENSSSSEDSTTKS) are enriched in low complexity.

Its subcellular location is the nucleus. The chain is Myoneurin (mynn) from Xenopus laevis (African clawed frog).